The sequence spans 122 residues: Large ribosomal subunit protein uL22 (122 aa).

Belongs to the universal ribosomal protein uL22 family. Part of the 50S ribosomal subunit.

This protein binds specifically to 23S rRNA; its binding is stimulated by other ribosomal proteins, e.g. L4, L17, and L20. It is important during the early stages of 50S assembly. It makes multiple contacts with different domains of the 23S rRNA in the assembled 50S subunit and ribosome. Its function is as follows. The globular domain of the protein is located near the polypeptide exit tunnel on the outside of the subunit, while an extended beta-hairpin is found that lines the wall of the exit tunnel in the center of the 70S ribosome. The protein is Large ribosomal subunit protein uL22 of Thermosynechococcus vestitus (strain NIES-2133 / IAM M-273 / BP-1).